The sequence spans 328 residues: Versiconal hemiacetal acetate esterase (328 aa).

The Involved in the stabilization of the negatively charged intermediate by the formation of the oxyanion hole signature appears at 82–84 (HGG). Catalysis depends on residues Ser156, Asp260, and His290.

The protein belongs to the 'GDXG' lipolytic enzyme family.

The enzyme catalyses (2S,3S)-versiconal hemiacetal acetate + H2O = (2S-3S)-versiconal hemiacetal + acetate + H(+). The catalysed reaction is (3S)-versiconol acetate + H2O = (S)-versiconol + acetate + H(+). It functions in the pathway mycotoxin biosynthesis. Versiconal hemiacetal acetate esterase; part of the fragmented gene cluster that mediates the biosynthesis of dothistromin (DOTH), a polyketide toxin very similar in structure to the aflatoxin precursor, versicolorin B. The first step of the pathway is the conversion of acetate to norsolorinic acid (NOR) and requires the fatty acid synthase subunits hexA and hexB, as well as the polyketide synthase pksA. PksA combines a hexanoyl starter unit and 7 malonyl-CoA extender units to synthesize the precursor NOR. The hexanoyl starter unit is provided to the acyl-carrier protein (ACP) domain by the fungal fatty acid synthase hexA/hexB. The second step is the conversion of NOR to averantin (AVN) and requires the norsolorinic acid ketoreductase nor1, which catalyzes the dehydration of norsolorinic acid to form (1'S)-averantin. The cytochrome P450 monooxygenase avnA then catalyzes the hydroxylation of AVN to 5'hydroxyaverantin (HAVN). The next step is performed by adhA that transforms HAVN to averufin (AVF). Averufin might then be converted to hydroxyversicolorone by cypX and avfA. Hydroxyversicolorone is further converted versiconal hemiacetal acetate (VHA) by moxY. VHA is then the substrate for the versiconal hemiacetal acetate esterase est1 to yield versiconal (VAL). Versicolorin B synthase vbsA then converts VAL to versicolorin B (VERB) by closing the bisfuran ring. Then, the activity of the versicolorin B desaturase verB leads to versicolorin A (VERA). DotB, a predicted chloroperoxidase, may perform epoxidation of the A-ring of VERA. Alternatively, a cytochrome P450, such as cypX or avnA could catalyze this step. It is also possible that another, uncharacterized, cytochrome P450 enzyme is responsible for this step. Opening of the epoxide could potentially be achieved by the epoxide hydrolase epoA. However, epoA seems not to be required for DOTH biosynthesis, but other epoxide hydrolases may have the ability to complement this hydrolysis. Alternatively, opening of the epoxide ring could be achieved non-enzymatically. The next step is the deoxygenation of ring A to yield the 5,8-dihydroxyanthraquinone which is most likely catalyzed by the NADPH dehydrogenase encoded by ver1. The last stages of DOTH biosynthesis are proposed to involve hydroxylation of the bisfuran. OrdB and norB might have oxidative roles here. An alternative possibility is that cytochrome P450 monoogenases such as avnA and cypX might perform these steps in addition to previously proposed steps. This chain is Versiconal hemiacetal acetate esterase, found in Dothistroma septosporum (strain NZE10 / CBS 128990) (Red band needle blight fungus).